The following is a 404-amino-acid chain: Probable tRNA sulfurtransferase (404 aa).

Residues 60–165 (HEVAESLKEI…DEAAYISYEN (106 aa)) form the THUMP domain. ATP contacts are provided by residues 183 to 184 (ML), 208 to 209 (HF), arginine 265, glycine 287, and glutamine 296.

It belongs to the ThiI family.

It is found in the cytoplasm. It catalyses the reaction [ThiI sulfur-carrier protein]-S-sulfanyl-L-cysteine + a uridine in tRNA + 2 reduced [2Fe-2S]-[ferredoxin] + ATP + H(+) = [ThiI sulfur-carrier protein]-L-cysteine + a 4-thiouridine in tRNA + 2 oxidized [2Fe-2S]-[ferredoxin] + AMP + diphosphate. It carries out the reaction [ThiS sulfur-carrier protein]-C-terminal Gly-Gly-AMP + S-sulfanyl-L-cysteinyl-[cysteine desulfurase] + AH2 = [ThiS sulfur-carrier protein]-C-terminal-Gly-aminoethanethioate + L-cysteinyl-[cysteine desulfurase] + A + AMP + 2 H(+). Its pathway is cofactor biosynthesis; thiamine diphosphate biosynthesis. Catalyzes the ATP-dependent transfer of a sulfur to tRNA to produce 4-thiouridine in position 8 of tRNAs, which functions as a near-UV photosensor. Also catalyzes the transfer of sulfur to the sulfur carrier protein ThiS, forming ThiS-thiocarboxylate. This is a step in the synthesis of thiazole, in the thiamine biosynthesis pathway. The sulfur is donated as persulfide by IscS. This chain is Probable tRNA sulfurtransferase, found in Streptococcus agalactiae serotype III (strain NEM316).